Consider the following 334-residue polypeptide: Phosphate acyltransferase (334 aa).

It belongs to the PlsX family. As to quaternary structure, homodimer. Probably interacts with PlsY.

The protein resides in the cytoplasm. It catalyses the reaction a fatty acyl-[ACP] + phosphate = an acyl phosphate + holo-[ACP]. Its pathway is lipid metabolism; phospholipid metabolism. Its function is as follows. Catalyzes the reversible formation of acyl-phosphate (acyl-PO(4)) from acyl-[acyl-carrier-protein] (acyl-ACP). This enzyme utilizes acyl-ACP as fatty acyl donor, but not acyl-CoA. This Streptococcus thermophilus (strain ATCC BAA-491 / LMD-9) protein is Phosphate acyltransferase.